Consider the following 192-residue polypeptide: FAD-linked sulfhydryl oxidase erv2 (192 aa).

Over 1 to 8 (MILNRRIQ) the chain is Cytoplasmic. Residues 9–29 (VILPTLLILSFIIWIFHSVMV) traverse the membrane as a helical; Signal-anchor segment. Over 30-192 (DKDWRLFMPE…VINEDHDYSG (163 aa)) the chain is Lumenal. The 102-residue stretch at 61 to 162 (HDNNTNNLMV…TSCDGFNERY (102 aa)) folds into the ERV/ALR sulfhydryl oxidase domain. FAD is bound by residues W74, C138, H141, N145, and Y162. The cysteines at positions 138 and 155 are disulfide-linked.

It depends on FAD as a cofactor.

The protein localises to the endoplasmic reticulum membrane. It localises to the cytoplasm. It is found in the nucleus. It carries out the reaction 2 R'C(R)SH + O2 = R'C(R)S-S(R)CR' + H2O2. Its function is as follows. FAD-dependent sulfhydryl oxidase that catalyzes disulfide bond formation in the endoplasmic reticulum lumen. This is FAD-linked sulfhydryl oxidase erv2 (erv2) from Schizosaccharomyces pombe (strain 972 / ATCC 24843) (Fission yeast).